The primary structure comprises 75 residues: Conotoxin VnMKLT2-012 (75 aa).

The signal sequence occupies residues 1–23 (MMKLTCVLIIAVLFLTACQLTTA). A propeptide spanning residues 24-45 (ETRDEYRAVRSSDEVRNSRSTR) is cleaved from the precursor. The span at 31 to 45 (AVRSSDEVRNSRSTR) shows a compositional bias: basic and acidic residues. Residues 31-50 (AVRSSDEVRNSRSTRDCSGS) form a disordered region. 3 disulfides stabilise this stretch: C47/C60, C54/C65, and C59/C74.

It belongs to the conotoxin O1 superfamily. Expressed by the venom duct.

The protein localises to the secreted. The polypeptide is Conotoxin VnMKLT2-012 (Conus ventricosus (Mediterranean cone)).